Here is an 88-residue protein sequence, read N- to C-terminus: RNA-binding protein Hfq (88 aa).

In terms of domain architecture, Sm spans 9 to 68; that stretch reads DPFLNALRRERIPVSIYLVNGIKLQGQIESFDQFVILLKNTVNQMVYKHAISTVVPARAV. Residues 66–88 form a disordered region; sequence RAVSHHSGEQQRAPSDRPEKTED. Positions 71-88 are enriched in basic and acidic residues; the sequence is HSGEQQRAPSDRPEKTED.

The protein belongs to the Hfq family. As to quaternary structure, homohexamer.

In terms of biological role, RNA chaperone that binds small regulatory RNA (sRNAs) and mRNAs to facilitate mRNA translational regulation in response to envelope stress, environmental stress and changes in metabolite concentrations. Also binds with high specificity to tRNAs. This chain is RNA-binding protein Hfq, found in Vibrio atlanticus (strain LGP32) (Vibrio splendidus (strain Mel32)).